The sequence spans 811 residues: Leucine--tRNA ligase (811 aa).

Residues 40 to 50 (PYPSGRLHMGH) carry the 'HIGH' region motif. A 'KMSKS' region motif is present at residues 579 to 583 (KMSKS). ATP is bound at residue lysine 582.

Belongs to the class-I aminoacyl-tRNA synthetase family.

The protein localises to the cytoplasm. The catalysed reaction is tRNA(Leu) + L-leucine + ATP = L-leucyl-tRNA(Leu) + AMP + diphosphate. The protein is Leucine--tRNA ligase of Campylobacter fetus subsp. fetus (strain 82-40).